The primary structure comprises 79 residues: DNA-directed RNA polymerase subunit omega (79 aa).

Belongs to the RNA polymerase subunit omega family. As to quaternary structure, the RNAP catalytic core consists of 2 alpha, 1 beta, 1 beta' and 1 omega subunit. When a sigma factor is associated with the core the holoenzyme is formed, which can initiate transcription.

The catalysed reaction is RNA(n) + a ribonucleoside 5'-triphosphate = RNA(n+1) + diphosphate. In terms of biological role, promotes RNA polymerase assembly. Latches the N- and C-terminal regions of the beta' subunit thereby facilitating its interaction with the beta and alpha subunits. The sequence is that of DNA-directed RNA polymerase subunit omega (rpoZ) from Thermotoga maritima (strain ATCC 43589 / DSM 3109 / JCM 10099 / NBRC 100826 / MSB8).